The following is a 545-amino-acid chain: Glucans biosynthesis protein G (545 aa).

Residues 1 to 34 form the signal peptide; the sequence is MVSLLRCQSFKPSSSLICSLALSAAFALSSSAFA. The disordered stretch occupies residues 38–60; that stretch reads KPAENKPATPVVSPPKATAQPAN.

This sequence belongs to the OpgD/OpgG family.

It localises to the periplasm. It functions in the pathway glycan metabolism; osmoregulated periplasmic glucan (OPG) biosynthesis. Functionally, involved in the biosynthesis of osmoregulated periplasmic glucans (OPGs). The chain is Glucans biosynthesis protein G from Shewanella sp. (strain MR-4).